Reading from the N-terminus, the 224-residue chain is Cytidylate kinase (224 aa).

13–21 (GPSASGKGT) contacts ATP.

This sequence belongs to the cytidylate kinase family. Type 1 subfamily.

It is found in the cytoplasm. The enzyme catalyses CMP + ATP = CDP + ADP. The catalysed reaction is dCMP + ATP = dCDP + ADP. In Nitrosomonas eutropha (strain DSM 101675 / C91 / Nm57), this protein is Cytidylate kinase.